A 624-amino-acid polypeptide reads, in one-letter code: Adhesion and hyphal regulator 1 (624 aa).

Positions 19 to 46 (CVTCRDRHIKCDEQQPVCKNCQKSNRKC) form a DNA-binding region, zn(2)-C6 fungal-type. Disordered stretches follow at residues 63–84 (DDNK…YAFP) and 230–250 (PQHH…TDPN). Over residues 237-250 (DTSQHQETTSTDPN) the composition is skewed to polar residues.

As to quaternary structure, interacts with MCM1.

It localises to the nucleus. In terms of biological role, transcription factor that binds the promoters of genes involved in biofilm formation, which include several key adhesion genes, and recruits MCM1 to these sites. Plays an important role in hyphal growth and virulence. Promotes conversion of opaque cells to white phase, but needs existence of EFG1, a key regulator required for maintenance of the white state. The chain is Adhesion and hyphal regulator 1 (AHR1) from Candida albicans (strain SC5314 / ATCC MYA-2876) (Yeast).